Here is a 416-residue protein sequence, read N- to C-terminus: Dihydroorotase (416 aa).

Zn(2+)-binding residues include histidine 53 and histidine 55. Substrate contacts are provided by residues 55–57 and asparagine 87; that span reads HLR. Residues aspartate 145, histidine 172, histidine 225, and aspartate 298 each coordinate Zn(2+). Aspartate 298 is an active-site residue. Histidine 302 is a binding site for substrate.

The protein belongs to the metallo-dependent hydrolases superfamily. DHOase family. Class I DHOase subfamily. Zn(2+) serves as cofactor.

The enzyme catalyses (S)-dihydroorotate + H2O = N-carbamoyl-L-aspartate + H(+). It participates in pyrimidine metabolism; UMP biosynthesis via de novo pathway; (S)-dihydroorotate from bicarbonate: step 3/3. Catalyzes the reversible cyclization of carbamoyl aspartate to dihydroorotate. This Deinococcus radiodurans (strain ATCC 13939 / DSM 20539 / JCM 16871 / CCUG 27074 / LMG 4051 / NBRC 15346 / NCIMB 9279 / VKM B-1422 / R1) protein is Dihydroorotase.